The following is a 174-amino-acid chain: Balbiani ring protein 1 (174 aa).

The segment at 28–174 (KCRCTSAGKP…RPEGCGSAMR (147 aa)) is disordered. 8 tandem repeats follow at residues 42-52 (EPSKGSKPRPE), 53-63 (KPSKGSKPRPE), 64-74 (KPSKGSKPKPE), 75-85 (KPSKGSKPRPE), 124-134 (EPSKGSKPRPE), 135-145 (KPSKESKPRPE), 146-156 (KPSKGSKPRPE), and 157-167 (KPSKGSKPRPE). 4 X 11 AA tandem repeats regions lie at residues 42 to 85 (EPSK…PRPE) and 124 to 167 (EPSK…PRPE). 2 stretches are compositionally biased toward basic and acidic residues: residues 49–100 (PRPE…EKCA) and 121–159 (RKSE…EKPS).

As to expression, salivary gland.

The protein localises to the secreted. In terms of biological role, used by the larvae to construct a supramolecular structure, the larval tube. This is Balbiani ring protein 1 (BR1) from Chironomus tentans (Midge).